The chain runs to 238 residues: Ribonuclease PH (238 aa).

Phosphate contacts are provided by residues Arg-86 and 124-126 (GTR).

Belongs to the RNase PH family. In terms of assembly, homohexameric ring arranged as a trimer of dimers.

The catalysed reaction is tRNA(n+1) + phosphate = tRNA(n) + a ribonucleoside 5'-diphosphate. Its function is as follows. Phosphorolytic 3'-5' exoribonuclease that plays an important role in tRNA 3'-end maturation. Removes nucleotide residues following the 3'-CCA terminus of tRNAs; can also add nucleotides to the ends of RNA molecules by using nucleoside diphosphates as substrates, but this may not be physiologically important. Probably plays a role in initiation of 16S rRNA degradation (leading to ribosome degradation) during starvation. This chain is Ribonuclease PH, found in Actinobacillus succinogenes (strain ATCC 55618 / DSM 22257 / CCUG 43843 / 130Z).